Reading from the N-terminus, the 258-residue chain is Phosphoprotein ECPP44 (258 aa).

Disordered stretches follow at residues 1-25, 46-131, and 148-175; these read MASDDSVPQHSVEKTTEYESSDRGL, EKVQ…PVEV, and KLPGGGKKVEEETVAPPPPPAAAPVDCA. Basic and acidic residues-rich tracts occupy residues 11–25, 46–80, 109–124, and 148–158; these read SVEKTTEYESSDRGL, EKVQVSEPEPKYEDCKVVEEEEEKAAKPSLLEKLH, GLKEKIEEKIHHKEED, and KLPGGGKKVEE.

Belongs to the plant dehydrin family. Post-translationally, phosphorylated in embryogenic and somatic embryos. Not phosphorylated in non-embryogenic cells.

Functionally, phosphorylation of ECCP44 protein is thought to be involved in the acquisition of embryogenic competence. Unlike other dehydrins, it is not thought to function as an environmental stress tolerant. This Daucus carota (Wild carrot) protein is Phosphoprotein ECPP44 (ECPP44).